The primary structure comprises 390 residues: Chorismate synthase 1 (390 aa).

The NADP(+) site is built by Arg-39 and Arg-45. The segment at 95–117 (EQEEKEMKRKVTKPRPGHADLNG) is disordered. Residues 132–134 (RSS), 253–254 (NA), Gly-298, 313–317 (KPIPT), and Arg-339 each bind FMN.

It belongs to the chorismate synthase family. As to quaternary structure, homotetramer. The cofactor is FMNH2.

The catalysed reaction is 5-O-(1-carboxyvinyl)-3-phosphoshikimate = chorismate + phosphate. It functions in the pathway metabolic intermediate biosynthesis; chorismate biosynthesis; chorismate from D-erythrose 4-phosphate and phosphoenolpyruvate: step 7/7. Catalyzes the anti-1,4-elimination of the C-3 phosphate and the C-6 proR hydrogen from 5-enolpyruvylshikimate-3-phosphate (EPSP) to yield chorismate, which is the branch point compound that serves as the starting substrate for the three terminal pathways of aromatic amino acid biosynthesis. This reaction introduces a second double bond into the aromatic ring system. This Bacillus cereus (strain ZK / E33L) protein is Chorismate synthase 1.